Consider the following 366-residue polypeptide: Transaldolase (366 aa).

Lys-140 functions as the Schiff-base intermediate with substrate in the catalytic mechanism.

This sequence belongs to the transaldolase family. Type 2 subfamily.

Its subcellular location is the cytoplasm. The catalysed reaction is D-sedoheptulose 7-phosphate + D-glyceraldehyde 3-phosphate = D-erythrose 4-phosphate + beta-D-fructose 6-phosphate. Its pathway is carbohydrate degradation; pentose phosphate pathway; D-glyceraldehyde 3-phosphate and beta-D-fructose 6-phosphate from D-ribose 5-phosphate and D-xylulose 5-phosphate (non-oxidative stage): step 2/3. Transaldolase is important for the balance of metabolites in the pentose-phosphate pathway. This is Transaldolase from Saccharopolyspora erythraea (strain ATCC 11635 / DSM 40517 / JCM 4748 / NBRC 13426 / NCIMB 8594 / NRRL 2338).